Reading from the N-terminus, the 329-residue chain is Peroxidase 18 (329 aa).

The signal sequence occupies residues 1–29 (MALQFFSCKPKYTFLSSLLLLLLLSSSVA). 4 disulfides stabilise this stretch: Cys40–Cys116, Cys73–Cys78, Cys122–Cys325, and Cys201–Cys235. The active-site Proton acceptor is the His71. Asp72, Val75, Gly77, Asp79, and Ser81 together coordinate Ca(2+). Asn87 carries N-linked (GlcNAc...) asparagine glycosylation. Ile164 lines the substrate pocket. Heme b is bound at residue His194. Residue Thr195 coordinates Ca(2+). Asp249, Thr252, and Asp257 together coordinate Ca(2+).

This sequence belongs to the peroxidase family. Classical plant (class III) peroxidase subfamily. Requires heme b as cofactor. It depends on Ca(2+) as a cofactor.

It localises to the secreted. The catalysed reaction is 2 a phenolic donor + H2O2 = 2 a phenolic radical donor + 2 H2O. Its function is as follows. Removal of H(2)O(2), oxidation of toxic reductants, biosynthesis and degradation of lignin, suberization, auxin catabolism, response to environmental stresses such as wounding, pathogen attack and oxidative stress. These functions might be dependent on each isozyme/isoform in each plant tissue. The polypeptide is Peroxidase 18 (PER18) (Arabidopsis thaliana (Mouse-ear cress)).